A 129-amino-acid polypeptide reads, in one-letter code: Iron-sulfur cluster assembly 1 homolog, mitochondrial (129 aa).

A mitochondrion-targeting transit peptide spans 1-12 (MSASIARATVRA). 3 residues coordinate Fe cation: cysteine 57, cysteine 121, and cysteine 123.

It belongs to the HesB/IscA family.

The protein localises to the mitochondrion. In terms of biological role, involved in the maturation of mitochondrial 4Fe-4S proteins functioning late in the iron-sulfur cluster assembly pathway. Probably involved in the binding of an intermediate of Fe/S cluster assembly. In Danio rerio (Zebrafish), this protein is Iron-sulfur cluster assembly 1 homolog, mitochondrial (isca1).